Reading from the N-terminus, the 349-residue chain is NADH-quinone oxidoreductase subunit H (349 aa).

8 helical membrane passes run 19-39, 88-108, 123-143, 161-181, 202-222, 249-269, 284-304, and 325-345; these read VWTLTKIVAIIAPLMLCVAYL, GLFILGPILAIAPSLAAWAVV, LLFLLAITSVEVYGVIIAGWA, VSYEVAMGFALICVLLISASL, FLSWNWIPLFPMFIVFLISGI, GMAFALFFLAEYANMILVSIL, FLPDGFFWLALKTAFFLFVFL, and VFIPITLVWVIVVAVWMMSPL.

This sequence belongs to the complex I subunit 1 family. As to quaternary structure, NDH-1 is composed of 14 different subunits. Subunits NuoA, H, J, K, L, M, N constitute the membrane sector of the complex.

Its subcellular location is the cell inner membrane. It catalyses the reaction a quinone + NADH + 5 H(+)(in) = a quinol + NAD(+) + 4 H(+)(out). NDH-1 shuttles electrons from NADH, via FMN and iron-sulfur (Fe-S) centers, to quinones in the respiratory chain. The immediate electron acceptor for the enzyme in this species is believed to be ubiquinone. Couples the redox reaction to proton translocation (for every two electrons transferred, four hydrogen ions are translocated across the cytoplasmic membrane), and thus conserves the redox energy in a proton gradient. This subunit may bind ubiquinone. In Aromatoleum aromaticum (strain DSM 19018 / LMG 30748 / EbN1) (Azoarcus sp. (strain EbN1)), this protein is NADH-quinone oxidoreductase subunit H.